A 582-amino-acid polypeptide reads, in one-letter code: ATP-dependent lipid A-core flippase (582 aa).

The next 5 helical transmembrane spans lie at 25-45, 69-89, 137-159, 253-273, and 275-295; these read AGLI…TFML, LAVI…SYCI, ASSS…LFIM, PIIQ…ASFP, and VMET…IALM. Residues 28–310 form the ABC transmembrane type-1 domain; sequence IVAAIALILN…LTNVNTQFQR (283 aa). The ABC transporter domain occupies 342-578; it reads IEFRHVTFYY…QGVYAQLNRM (237 aa). Residue 376-383 participates in ATP binding; that stretch reads GRSGSGKS.

It belongs to the ABC transporter superfamily. Lipid exporter (TC 3.A.1.106) family. In terms of assembly, homodimer.

Its subcellular location is the cell inner membrane. It carries out the reaction ATP + H2O + lipid A-core oligosaccharideSide 1 = ADP + phosphate + lipid A-core oligosaccharideSide 2.. Functionally, involved in lipopolysaccharide (LPS) biosynthesis. Translocates lipid A-core from the inner to the outer leaflet of the inner membrane. Transmembrane domains (TMD) form a pore in the inner membrane and the ATP-binding domain (NBD) is responsible for energy generation. The protein is ATP-dependent lipid A-core flippase of Yersinia pestis bv. Antiqua (strain Antiqua).